Reading from the N-terminus, the 796-residue chain is Probable phosphoketolase (796 aa).

Belongs to the XFP family. Thiamine diphosphate serves as cofactor.

The chain is Probable phosphoketolase from Streptomyces coelicolor (strain ATCC BAA-471 / A3(2) / M145).